Here is a 276-residue protein sequence, read N- to C-terminus: Kallikrein-10 (276 aa).

A signal peptide spans 1–30 (MRAPHLHLSAASGARALAKLLPLLMAQLWA). The N-linked (GlcNAc...) asparagine glycan is linked to N39. The Peptidase S1 domain maps to 47 to 274 (AYGSPCARGS…YMSWINKVIR (228 aa)). 5 disulfides stabilise this stretch: C52–C162, C71–C87, C169–C235, C201–C215, and C225–C250. Active-site charge relay system residues include H86 and D137. The active-site Charge relay system is S229.

This sequence belongs to the peptidase S1 family. Kallikrein subfamily. Expressed in breast, ovary and prostate.

The protein resides in the secreted. Functionally, has a tumor-suppressor role for NES1 in breast and prostate cancer. The chain is Kallikrein-10 (KLK10) from Homo sapiens (Human).